Here is a 1099-residue protein sequence, read N- to C-terminus: Adenylate-forming reductase Nps11 (1099 aa).

Residues 29-360 (AEHNSNVPFF…GTECGGLNSM (332 aa)) form an adenylation (A) domain region. AMP-binding positions include His244, 347 to 348 (NV), Thr352, and 432 to 435 (LVGR). Residues 578-664 (WSEESLVVWL…RLSQALARVV (87 aa)) form the Carrier domain. Position 613 is an O-(pantetheine 4'-phosphoryl)serine (Ser613). A reductase (R) domain region spans residues 717–952 (LTGSTGGLGS…VVSWLPPHAV (236 aa)). NADP(+) contacts are provided by residues 721–724 (TGGL), 809–811 (NAW), Tyr883, and Lys887.

Belongs to the adenylate-forming reductase family.

Its function is as follows. Adenylate-forming reductase, a natural product biosynthesis enzyme that resembles non-ribosomal peptide synthetases, yet serves to modify one substrate, rather than to condense two or more building blocks. The A-domain preferentially accepts benzoic acid as substrate. The natural product of the enzyme is not yet known. The protein is Adenylate-forming reductase Nps11 of Serpula lacrymans var. lacrymans (strain S7.9) (Dry rot fungus).